The sequence spans 332 residues: 3'(2'),5'-bisphosphate nucleotidase (332 aa).

Catalysis depends on Asp49, which acts as the Proton acceptor. Residues Glu73, Asp129, Ile131, and Asp132 each contribute to the Mg(2+) site. Thr134 acts as the Proton acceptor in catalysis. Adenosine 3',5'-bisphosphate is bound by residues Thr134, Ser245, Lys248, Arg262, and Asp274. The AMP site is built by Ser245, Lys248, Arg262, and Asp274. Asp274 contacts Mg(2+).

This sequence belongs to the inositol monophosphatase superfamily. It depends on Mg(2+) as a cofactor.

The catalysed reaction is 3'-phosphoadenylyl sulfate + H2O = adenosine 5'-phosphosulfate + phosphate. It carries out the reaction adenosine 3',5'-bisphosphate + H2O = AMP + phosphate. It catalyses the reaction adenosine 2',5'-bisphosphate + H2O = AMP + phosphate. The enzyme catalyses 1D-myo-inositol 1,4-bisphosphate + H2O = 1D-myo-inositol 4-phosphate + phosphate. The catalysed reaction is 1D-myo-inositol 1,3,4-trisphosphate + H2O = 1D-myo-inositol 3,4-bisphosphate + phosphate. Its function is as follows. Phosphatase that converts adenosine 3'-phosphate 5'-phosphosulfate (PAPS) to adenosine 5'-phosphosulfate (APS) and 3'(2')-phosphoadenosine 5'-phosphate (PAP) to AMP. Is also able to hydrolyze inositol 1,4-bisphosphate and inositol 1,3,4-trisphosphate. This chain is 3'(2'),5'-bisphosphate nucleotidase, found in Dictyostelium discoideum (Social amoeba).